Here is a 278-residue protein sequence, read N- to C-terminus: Large ribosomal subunit protein uL2 (278 aa).

2 disordered regions span residues 29-55 (PEKS…RHQG) and 225-278 (VMNP…NKKR). Basic residues predominate over residues 258–278 (RSNKKASNKYIVRRRTKNKKR).

Belongs to the universal ribosomal protein uL2 family. As to quaternary structure, part of the 50S ribosomal subunit. Forms a bridge to the 30S subunit in the 70S ribosome. In terms of processing, the N-terminus is blocked. Post-translationally, phosphorylated on serine and threonine residues.

One of the primary rRNA binding proteins. Required for association of the 30S and 50S subunits to form the 70S ribosome, for tRNA binding and peptide bond formation. It has been suggested to have peptidyltransferase activity; this is somewhat controversial. Makes several contacts with the 16S rRNA in the 70S ribosome. This Streptomyces collinus protein is Large ribosomal subunit protein uL2.